Here is a 242-residue protein sequence, read N- to C-terminus: Uridylate kinase (242 aa).

16 to 19 (KVSG) is an ATP binding site. Glycine 58 is a binding site for UMP. Residues glycine 59 and arginine 63 each contribute to the ATP site. UMP-binding positions include aspartate 78 and 139 to 146 (TGNPFCTT). Residues threonine 166, glutamine 167, tyrosine 172, and aspartate 175 each coordinate ATP.

It belongs to the UMP kinase family. Homohexamer.

It localises to the cytoplasm. The catalysed reaction is UMP + ATP = UDP + ADP. It participates in pyrimidine metabolism; CTP biosynthesis via de novo pathway; UDP from UMP (UMPK route): step 1/1. Inhibited by UTP. In terms of biological role, catalyzes the reversible phosphorylation of UMP to UDP. This is Uridylate kinase from Rickettsia felis (strain ATCC VR-1525 / URRWXCal2) (Rickettsia azadi).